A 191-amino-acid polypeptide reads, in one-letter code: Potassium-transporting ATPase KdpC subunit (191 aa).

A helical transmembrane segment spans residues 11–31; sequence LFVLLTAVTGVVYPLAVTGIA.

The protein belongs to the KdpC family. In terms of assembly, the system is composed of three essential subunits: KdpA, KdpB and KdpC.

It is found in the cell inner membrane. Functionally, part of the high-affinity ATP-driven potassium transport (or Kdp) system, which catalyzes the hydrolysis of ATP coupled with the electrogenic transport of potassium into the cytoplasm. This subunit acts as a catalytic chaperone that increases the ATP-binding affinity of the ATP-hydrolyzing subunit KdpB by the formation of a transient KdpB/KdpC/ATP ternary complex. The polypeptide is Potassium-transporting ATPase KdpC subunit (Dechloromonas aromatica (strain RCB)).